The chain runs to 459 residues: Alpha-N-acetylgalactosaminidase (459 aa).

The tat-type signal signal peptide spans 1-31; the sequence is MHNIHRRHFLKAAGAVTAGLVTANIALNANA. NAD(+)-binding positions include 64 to 65, Asp-86, 135 to 138, 155 to 156, and Asn-184; these read ER, WEWH, and EV. Substrate-binding positions include Tyr-213, Arg-232, 244–247, and Tyr-326; that span reads YPTH. Tyr-244 contributes to the NAD(+) binding site.

The protein belongs to the Gfo/Idh/MocA family. Glycosyl hydrolase 109 subfamily. It depends on NAD(+) as a cofactor. Predicted to be exported by the Tat system. The position of the signal peptide cleavage has not been experimentally proven.

The catalysed reaction is Cleavage of non-reducing alpha-(1-&gt;3)-N-acetylgalactosamine residues from human blood group A and AB mucin glycoproteins, Forssman hapten and blood group A lacto series glycolipids.. Glycosidase that has specific alpha-N-acetylgalactosaminidase activity. In Shewanella oneidensis (strain ATCC 700550 / JCM 31522 / CIP 106686 / LMG 19005 / NCIMB 14063 / MR-1), this protein is Alpha-N-acetylgalactosaminidase (nagA).